A 222-amino-acid polypeptide reads, in one-letter code: Ras-related protein RABA4d (222 aa).

Gly22–Thr29 serves as a coordination point for GTP. Residues Ser44–Phe52 carry the Effector region motif. Residues Asp70–Gln74, Asn128–Asp131, and Ser158–Ala159 each bind GTP. S-geranylgeranyl cysteine attachment occurs at residues Cys218 and Cys219.

This sequence belongs to the small GTPase superfamily. Rab family. As to quaternary structure, interacts with PI4KB1. Specifically expressed in pollen and localized to the tips of growing pollen tubes.

The protein localises to the cytoplasmic vesicle membrane. In terms of biological role, intracellular vesicle trafficking and protein transport. Plays an important role in the regulation of pollen tube tip growth. The protein is Ras-related protein RABA4d (RABA4D) of Arabidopsis thaliana (Mouse-ear cress).